Consider the following 427-residue polypeptide: Serine hydroxymethyltransferase (427 aa).

Residue 120–122 participates in (6S)-5,6,7,8-tetrahydrofolate binding; the sequence is GHI. Lys-226 bears the N6-(pyridoxal phosphate)lysine mark.

It belongs to the SHMT family. In terms of assembly, homodimer. It depends on pyridoxal 5'-phosphate as a cofactor.

It is found in the cytoplasm. Its pathway is amino-acid biosynthesis; glycine biosynthesis; glycine from L-serine: step 1/1. Catalyzes the reversible interconversion of serine and glycine with a modified folate serving as the one-carbon carrier. Also exhibits a pteridine-independent aldolase activity toward beta-hydroxyamino acids, producing glycine and aldehydes, via a retro-aldol mechanism. This Pyrococcus abyssi (strain GE5 / Orsay) protein is Serine hydroxymethyltransferase.